The following is a 375-amino-acid chain: Probable cytochrome c oxidase subunit 2 (375 aa).

3 consecutive transmembrane segments (helical) span residues Leu-36 to Trp-56, Ile-80 to Phe-100, and Leu-122 to Val-142. 4 residues coordinate Cu cation: His-264, Cys-305, Cys-309, and His-313. Residues Val-353–Asp-363 are compositionally biased toward polar residues. Residues Val-353–Glu-375 are disordered.

It belongs to the cytochrome c oxidase subunit 2 family. Cu cation is required as a cofactor. Heme serves as cofactor.

It localises to the cell membrane. It catalyses the reaction 4 Fe(II)-[cytochrome c] + O2 + 8 H(+)(in) = 4 Fe(III)-[cytochrome c] + 2 H2O + 4 H(+)(out). Its function is as follows. Subunits I and II form the functional core of the enzyme complex. Electrons originating in cytochrome c are transferred via heme a and Cu(A) to the binuclear center formed by heme a3 and Cu(B). This chain is Probable cytochrome c oxidase subunit 2 (ctaC), found in Nocardia farcinica (strain IFM 10152).